We begin with the raw amino-acid sequence, 283 residues long: Elongation factor Ts (283 aa).

Residues 80 to 83 (TDFV) are involved in Mg(2+) ion dislocation from EF-Tu.

The protein belongs to the EF-Ts family.

It is found in the cytoplasm. Functionally, associates with the EF-Tu.GDP complex and induces the exchange of GDP to GTP. It remains bound to the aminoacyl-tRNA.EF-Tu.GTP complex up to the GTP hydrolysis stage on the ribosome. The polypeptide is Elongation factor Ts (Klebsiella pneumoniae (strain 342)).